The primary structure comprises 391 residues: MLDEESSIQRRDVLSALGAAGVTTLAGCTGGDTGDTDDTEASETTASEGTTSGTTTGDVETTDGGGPSEGETVNAAWVYISEIGDLGWSWAHDQARQAVDEQYDWLETEYTEAVAPSDSERVFEQYAQGDVDVIFGTTFGYQDPMYAVAEDYPDTVFEHATGYRTRENMGRYMGRIYEPRYLAGQATGMVTENNTIGYVAAFPIPEVVRSINAMALGARSVNPEATFKVRWVNAWFDPPTAREAANALIDEGCDVIAQEQDSPAAVRAASDAGVWTSGYNAPMGQFGGENYLISPIWDWTEFYGPTLESLHEGSWEADAFWGGMETGVPMLDEWGPNVSQEVKDQVAATEEQILNDELDVWAGSAFEGESDEFLFQEMSSFVEGVEGEVPS.

The N-terminal stretch at 1-28 (MLDEESSIQRRDVLSALGAAGVTTLAGC) is a signal peptide. A disordered region spans residues 24-71 (TLAGCTGGDTGDTDDTEASETTASEGTTSGTTTGDVETTDGGGPSEGE). Residues 42–59 (SETTASEGTTSGTTTGDV) show a composition bias toward low complexity.

It belongs to the BMP lipoprotein family. In terms of assembly, the complex is composed of two ATP-binding proteins (TsgD13), two transmembrane proteins (TsgB13 and TsgC13) and a solute-binding protein (TsgA13).

Its function is as follows. Part of an ABC transporter complex involved in glucose import. The protein is Putative ABC transporter glucose-binding protein TsgA13 (tsgA13) of Haloferax volcanii (strain ATCC 29605 / DSM 3757 / JCM 8879 / NBRC 14742 / NCIMB 2012 / VKM B-1768 / DS2) (Halobacterium volcanii).